Here is a 55-residue protein sequence, read N- to C-terminus: Small ribosomal subunit protein eS31 (55 aa).

Cysteine 27, cysteine 30, cysteine 45, and cysteine 48 together coordinate Zn(2+). Residues 27-48 form a C4-type zinc finger; the sequence is CSRCGKGFFMAQHKDRRSCGKC.

This sequence belongs to the eukaryotic ribosomal protein eS31 family. As to quaternary structure, part of the 30S ribosomal subunit. Zn(2+) serves as cofactor.

This Cenarchaeum symbiosum (strain A) protein is Small ribosomal subunit protein eS31.